We begin with the raw amino-acid sequence, 119 residues long: UPF0102 protein Nther_1376 (119 aa).

This sequence belongs to the UPF0102 family.

The chain is UPF0102 protein Nther_1376 from Natranaerobius thermophilus (strain ATCC BAA-1301 / DSM 18059 / JW/NM-WN-LF).